Consider the following 202-residue polypeptide: ATP-dependent Clp protease proteolytic subunit 2 (202 aa).

S99 functions as the Nucleophile in the catalytic mechanism. Residue H124 is part of the active site.

Belongs to the peptidase S14 family. Fourteen ClpP subunits assemble into 2 heptameric rings which stack back to back to give a disk-like structure with a central cavity, resembling the structure of eukaryotic proteasomes.

It localises to the cytoplasm. The catalysed reaction is Hydrolysis of proteins to small peptides in the presence of ATP and magnesium. alpha-casein is the usual test substrate. In the absence of ATP, only oligopeptides shorter than five residues are hydrolyzed (such as succinyl-Leu-Tyr-|-NHMec, and Leu-Tyr-Leu-|-Tyr-Trp, in which cleavage of the -Tyr-|-Leu- and -Tyr-|-Trp bonds also occurs).. Cleaves peptides in various proteins in a process that requires ATP hydrolysis. Has a chymotrypsin-like activity. Plays a major role in the degradation of misfolded proteins. This chain is ATP-dependent Clp protease proteolytic subunit 2, found in Desulfitobacterium hafniense (strain Y51).